A 257-amino-acid polypeptide reads, in one-letter code: 5'-nucleotidase SurE (257 aa).

The a divalent metal cation site is built by aspartate 8, aspartate 9, serine 40, and asparagine 97.

It belongs to the SurE nucleotidase family. The cofactor is a divalent metal cation.

The protein localises to the cytoplasm. It carries out the reaction a ribonucleoside 5'-phosphate + H2O = a ribonucleoside + phosphate. Nucleotidase that shows phosphatase activity on nucleoside 5'-monophosphates. This is 5'-nucleotidase SurE from Desulforudis audaxviator (strain MP104C).